The following is a 246-amino-acid chain: Ribonuclease 3 (246 aa).

Residues 20-145 (FSKLEKILGF…FVGAIYLDRG (126 aa)) enclose the RNase III domain. Mg(2+) is bound at residue E62. D66 is an active-site residue. Residues N131 and E134 each coordinate Mg(2+). E134 is an active-site residue. The region spanning 173–241 (SYKSLLIEWC…SKRGYFVFQS (69 aa)) is the DRBM domain.

The protein belongs to the ribonuclease III family. In terms of assembly, homodimer. It depends on Mg(2+) as a cofactor.

It is found in the cytoplasm. It catalyses the reaction Endonucleolytic cleavage to 5'-phosphomonoester.. In terms of biological role, digests double-stranded RNA. Involved in the processing of primary rRNA transcript to yield the immediate precursors to the large and small rRNAs (23S and 16S). Processes some mRNAs, and tRNAs when they are encoded in the rRNA operon. Processes pre-crRNA and tracrRNA of type II CRISPR loci if present in the organism. This Flavobacterium psychrophilum (strain ATCC 49511 / DSM 21280 / CIP 103535 / JIP02/86) protein is Ribonuclease 3.